The following is a 125-amino-acid chain: Large ribosomal subunit protein bL12 (125 aa).

It belongs to the bacterial ribosomal protein bL12 family. In terms of assembly, homodimer. Part of the 50S ribosomal subunit; present in 6 copies per ribosome. Forms part of the ribosomal stalk which helps the ribosome interact with GTP-bound translation factors. Forms a heptameric L10(L12)2(L12)2(L12)2 complex, where L10 forms an elongated spine to which 3 L12 dimers bind in a sequential fashion.

Functionally, forms part of the ribosomal stalk which helps the ribosome interact with GTP-bound translation factors. Is thus essential for accurate translation. The chain is Large ribosomal subunit protein bL12 from Agrobacterium fabrum (strain C58 / ATCC 33970) (Agrobacterium tumefaciens (strain C58)).